A 656-amino-acid chain; its full sequence is CoB--CoM heterodisulfide reductase iron-sulfur subunit A 2 (656 aa).

152–175 (GGGVSGIQAALDLADMGFEVILVE) contacts FAD. 4Fe-4S ferredoxin-type domains are found at residues 238-269 (KKPR…FDEG), 286-315 (SVFT…FDQE), 577-606 (IVSE…LVEK), and 610-639 (LVAE…QNHF). The [4Fe-4S] cluster site is built by Cys248, Cys251, Cys254, Cys258, Cys295, Cys298, Cys301, Cys305, Cys586, Cys589, Cys592, Cys596, Cys619, Cys622, Cys625, and Cys629.

This sequence belongs to the HdrA family. As to quaternary structure, the ferredoxin:CoB-CoM heterodisulfide reductase is composed of three subunits; HdrA, HdrB and HdrC. It depends on [4Fe-4S] cluster as a cofactor. The cofactor is FAD.

It functions in the pathway cofactor metabolism; coenzyme M-coenzyme B heterodisulfide reduction; coenzyme B and coenzyme M from coenzyme M-coenzyme B heterodisulfide: step 1/1. In terms of biological role, part of a complex that catalyzes the reversible reduction of CoM-S-S-CoB to the thiol-coenzymes H-S-CoM (coenzyme M) and H-S-CoB (coenzyme B). The protein is CoB--CoM heterodisulfide reductase iron-sulfur subunit A 2 (hdrA2) of Methanopyrus kandleri (strain AV19 / DSM 6324 / JCM 9639 / NBRC 100938).